We begin with the raw amino-acid sequence, 352 residues long: UDP-3-O-acylglucosamine N-acyltransferase (352 aa).

H244 functions as the Proton acceptor in the catalytic mechanism.

Belongs to the transferase hexapeptide repeat family. LpxD subfamily. Homotrimer.

It carries out the reaction a UDP-3-O-[(3R)-3-hydroxyacyl]-alpha-D-glucosamine + a (3R)-hydroxyacyl-[ACP] = a UDP-2-N,3-O-bis[(3R)-3-hydroxyacyl]-alpha-D-glucosamine + holo-[ACP] + H(+). It participates in bacterial outer membrane biogenesis; LPS lipid A biosynthesis. In terms of biological role, catalyzes the N-acylation of UDP-3-O-acylglucosamine using 3-hydroxyacyl-ACP as the acyl donor. Is involved in the biosynthesis of lipid A, a phosphorylated glycolipid that anchors the lipopolysaccharide to the outer membrane of the cell. The polypeptide is UDP-3-O-acylglucosamine N-acyltransferase (Anaeromyxobacter sp. (strain Fw109-5)).